A 412-amino-acid polypeptide reads, in one-letter code: Regulator of microtubule dynamics protein 2 (412 aa).

The chain crosses the membrane as a helical span at residues 9–28 (LLLGIMAGTAGISLLVLWYH). S51 is subject to Phosphoserine. The stretch at 72–110 (QLQILEKLNELLTNVEELKEEIKFLKETIPKLEECIQDE) forms a coiled coil. The residue at position 121 (S121) is a Phosphoserine. A disordered region spans residues 122–153 (PQHRARKKKTTTTTVQRPATSNSSEEAESEGG). Residue T141 is modified to Phosphothreonine. Y154 bears the Phosphotyrosine mark. Phosphothreonine occurs at positions 156 and 159.

This sequence belongs to the RMDN family. In terms of assembly, interacts with microtubules.

It is found in the membrane. Its subcellular location is the cytoplasm. The protein localises to the cytoskeleton. It localises to the spindle. The protein resides in the spindle pole. The polypeptide is Regulator of microtubule dynamics protein 2 (Rmdn2) (Rattus norvegicus (Rat)).